A 252-amino-acid chain; its full sequence is MQPAIKLRNIELGSCRPKLAVPITGTTINDILAATTPILAAQPDVVEWRIDFFKDVTNPEQLKSAGQQLRQALGDIALLTTFRTKGEGGELALSDTEYFKLCETVLDGGFTDALDVERYHDEQAVKQIVAAAHEHQVVVIMSNHDFDKTPAVAEIVKRLTSMVDYGADVAKMAVMPQSVEDVLTLLTATNIARQTLPQPVITMSMGDLGKVSRLAGEVFGSCLSFATVGAASAPGQIALENLRPELEDLKLN.

Residues 47 to 49 (EWR) and R83 each bind 3-dehydroquinate. H144 acts as the Proton donor/acceptor in catalysis. Residue K171 is the Schiff-base intermediate with substrate of the active site. 3-dehydroquinate contacts are provided by R213, S232, and Q236.

The protein belongs to the type-I 3-dehydroquinase family. In terms of assembly, homodimer.

It carries out the reaction 3-dehydroquinate = 3-dehydroshikimate + H2O. It functions in the pathway metabolic intermediate biosynthesis; chorismate biosynthesis; chorismate from D-erythrose 4-phosphate and phosphoenolpyruvate: step 3/7. Involved in the third step of the chorismate pathway, which leads to the biosynthesis of aromatic amino acids. Catalyzes the cis-dehydration of 3-dehydroquinate (DHQ) and introduces the first double bond of the aromatic ring to yield 3-dehydroshikimate. This Lactiplantibacillus plantarum (strain ATCC BAA-793 / NCIMB 8826 / WCFS1) (Lactobacillus plantarum) protein is 3-dehydroquinate dehydratase.